A 156-amino-acid chain; its full sequence is Crossover junction endodeoxyribonuclease RuvC (156 aa).

Residues Asp7, Glu66, and Asp138 contribute to the active site. Mg(2+) contacts are provided by Asp7, Glu66, and Asp138.

The protein belongs to the RuvC family. In terms of assembly, homodimer which binds Holliday junction (HJ) DNA. The HJ becomes 2-fold symmetrical on binding to RuvC with unstacked arms; it has a different conformation from HJ DNA in complex with RuvA. In the full resolvosome a probable DNA-RuvA(4)-RuvB(12)-RuvC(2) complex forms which resolves the HJ. Mg(2+) is required as a cofactor.

The protein localises to the cytoplasm. It carries out the reaction Endonucleolytic cleavage at a junction such as a reciprocal single-stranded crossover between two homologous DNA duplexes (Holliday junction).. Functionally, the RuvA-RuvB-RuvC complex processes Holliday junction (HJ) DNA during genetic recombination and DNA repair. Endonuclease that resolves HJ intermediates. Cleaves cruciform DNA by making single-stranded nicks across the HJ at symmetrical positions within the homologous arms, yielding a 5'-phosphate and a 3'-hydroxyl group; requires a central core of homology in the junction. The consensus cleavage sequence is 5'-(A/T)TT(C/G)-3'. Cleavage occurs on the 3'-side of the TT dinucleotide at the point of strand exchange. HJ branch migration catalyzed by RuvA-RuvB allows RuvC to scan DNA until it finds its consensus sequence, where it cleaves and resolves the cruciform DNA. This is Crossover junction endodeoxyribonuclease RuvC from Ehrlichia canis (strain Jake).